Here is a 164-residue protein sequence, read N- to C-terminus: Dehydrin Rab16C (164 aa).

A compositionally biased stretch (gly residues) spans 42–51 (MGGHHAGAGG). The interval 42-164 (MGGHHAGAGG…KIKEKLPGQH (123 aa)) is disordered. Residues 105–115 (GNNHQQQQMMG) show a composition bias toward low complexity. Residues 128 to 138 (GMTGAGTGTGV) are compositionally biased toward gly residues. Residues 147-164 (GEKKGFMDKIKEKLPGQH) show a composition bias toward basic and acidic residues.

The protein belongs to the plant dehydrin family.

This is Dehydrin Rab16C (RAB16C) from Oryza sativa subsp. indica (Rice).